Reading from the N-terminus, the 92-residue chain is Small ribosomal subunit protein uS19 (92 aa).

The protein belongs to the universal ribosomal protein uS19 family.

In terms of biological role, protein S19 forms a complex with S13 that binds strongly to the 16S ribosomal RNA. The polypeptide is Small ribosomal subunit protein uS19 (Rhodopseudomonas palustris (strain BisB5)).